We begin with the raw amino-acid sequence, 143 residues long: Large ribosomal subunit protein uL15 (143 aa).

Residues 1 to 59 form a disordered region; it reads MELNTITPGQGAKHAKRRVGRGIGSGLGKTAGRGHKGQKSRSGGYHKVGFEGGQMPMQR. Over residues 21–31 the composition is skewed to gly residues; the sequence is RGIGSGLGKTA.

This sequence belongs to the universal ribosomal protein uL15 family. As to quaternary structure, part of the 50S ribosomal subunit.

Its function is as follows. Binds to the 23S rRNA. The chain is Large ribosomal subunit protein uL15 from Polaromonas naphthalenivorans (strain CJ2).